We begin with the raw amino-acid sequence, 653 residues long: Leishmanolysin homolog (653 aa).

The first 44 residues, 1-44, serve as a signal peptide directing secretion; that stretch reads MHAPPTATRRSGPRRTHGIMARLVRLAAGVLVVTLVIGALTALS. Residues 45–113 constitute a propeptide, activation peptide; sequence ADDAKTHPHK…ALAGDSAPDV (69 aa). 2 cysteine pairs are disulfide-bonded: cysteine 138–cysteine 155 and cysteine 203–cysteine 242. Residue histidine 276 participates in Zn(2+) binding. Residue glutamate 277 is part of the active site. Residues histidine 280 and histidine 346 each coordinate Zn(2+). 7 disulfide bridges follow: cysteine 326–cysteine 398, cysteine 405–cysteine 468, cysteine 418–cysteine 437, cysteine 427–cysteine 502, cysteine 479–cysteine 524, cysteine 529–cysteine 579, and cysteine 549–cysteine 572. Asparagine 383 and asparagine 409 each carry an N-linked (GlcNAc...) asparagine glycan. The N-linked (GlcNAc...) asparagine glycan is linked to asparagine 569. The tract at residues 590–631 is disordered; it reads ESMTNSGSGSSRPAPVEPSGSGSGSSAATTAPSPTRDGSAAA. The span at 591–600 shows a compositional bias: polar residues; the sequence is SMTNSGSGSS. Over residues 607–631 the composition is skewed to low complexity; it reads PSGSGSGSSAATTAPSPTRDGSAAA. Serine 628 carries the GPI-anchor amidated serine lipid modification. Positions 629–653 are cleaved as a propeptide — removed in mature form; that stretch reads AAADRIAPRTAAVALLALAVAAACV.

This sequence belongs to the peptidase M8 family. Requires Zn(2+) as cofactor.

The protein resides in the cell membrane. The catalysed reaction is Preference for hydrophobic residues at P1 and P1' and basic residues at P2' and P3'. A model nonapeptide is cleaved at -Ala-Tyr-|-Leu-Lys-Lys-.. Its function is as follows. Plays an integral role during the infection of macrophages in the mammalian host. The polypeptide is Leishmanolysin homolog (gp63) (Crithidia fasciculata).